The primary structure comprises 150 residues: Large ribosomal subunit protein bL9 (150 aa).

Belongs to the bacterial ribosomal protein bL9 family.

In terms of biological role, binds to the 23S rRNA. In Burkholderia vietnamiensis (strain G4 / LMG 22486) (Burkholderia cepacia (strain R1808)), this protein is Large ribosomal subunit protein bL9.